A 351-amino-acid chain; its full sequence is Outer membrane protein A (351 aa).

An N-terminal signal peptide occupies residues 1-21 (MKKTAIAITVALAGFATVAQA). The next 8 beta stranded transmembrane spans lie at 27–37 (TWYTGAKLGWS), 55–66 (QLGAGAFGGYQV), 70–78 (VGFEMGYDW), 96–107 (QGVQLTAKLGYP), 112–120 (LDVYTRLGG), 147–156 (PVFAGGVEWA), 161–168 (IATRLEYQ), and 187–195 (LLSLGVSYR). 4 repeat units span residues 206 to 207 (AP), 208 to 209 (AP), 210 to 211 (AP), and 212 to 213 (AP). The 4 X 2 AA tandem repeats of A-P stretch occupies residues 206–213 (APAPAPAP). An OmpA-like domain is found at 215-343 (VQTKHFTLKS…RVEIEVKGIK (129 aa)). An intrachain disulfide couples Cys-316 to Cys-328.

Belongs to the outer membrane OOP (TC 1.B.6) superfamily. OmpA family. In terms of assembly, monomer and homodimer.

The protein localises to the cell outer membrane. Its function is as follows. With TolR probably plays a role in maintaining the position of the peptidoglycan cell wall in the periplasm. Acts as a porin with low permeability that allows slow penetration of small solutes; an internal gate slows down solute passage. In terms of biological role, required for conjugation with F-type plasmids; probably serves as the mating receptor on recipient cells. This chain is Outer membrane protein A, found in Shigella dysenteriae.